The following is a 1193-amino-acid chain: Magnesium-chelatase subunit H (1193 aa).

This sequence belongs to the Mg-chelatase subunit H family.

The enzyme catalyses protoporphyrin IX + Mg(2+) + ATP + H2O = Mg-protoporphyrin IX + ADP + phosphate + 3 H(+). It participates in porphyrin-containing compound metabolism; bacteriochlorophyll biosynthesis (light-independent). In terms of biological role, involved in bacteriochlorophyll pigment biosynthesis; introduces a magnesium ion into protoporphyrin IX to yield Mg-protoroporphyrin IX. This Cereibacter sphaeroides (strain ATCC 17023 / DSM 158 / JCM 6121 / CCUG 31486 / LMG 2827 / NBRC 12203 / NCIMB 8253 / ATH 2.4.1.) (Rhodobacter sphaeroides) protein is Magnesium-chelatase subunit H (bchH).